We begin with the raw amino-acid sequence, 381 residues long: Subtilisin J (381 aa).

Residues 1–29 (MRSKKLWISLLFALTLIFTMAFSNMSVQA) form the signal peptide. Positions 30–106 (AGKSSTEKKY…VEEDHIAHEY (77 aa)) are excised as a propeptide. The Inhibitor I9 domain maps to 38–103 (KYIVGFKQTM…VAYVEEDHIA (66 aa)). Gln108 contributes to the Ca(2+) binding site. Residues 111 to 380 (PYGISQIKAP…KGLINVQAAA (270 aa)) enclose the Peptidase S8 domain. Asp138 serves as the catalytic Charge relay system. Asp147 contributes to the Ca(2+) binding site. Catalysis depends on His170, which acts as the Charge relay system. Leu181, Asn183, Ile185, Val187, Ala275, Tyr277, and Thr280 together coordinate Ca(2+). Ser327 functions as the Charge relay system in the catalytic mechanism.

Belongs to the peptidase S8 family. Ca(2+) is required as a cofactor.

It is found in the secreted. It catalyses the reaction Hydrolysis of proteins with broad specificity for peptide bonds, and a preference for a large uncharged residue in P1. Hydrolyzes peptide amides.. Functionally, subtilisin is an extracellular alkaline serine protease, it catalyzes the hydrolysis of proteins and peptide amides. In Geobacillus stearothermophilus (Bacillus stearothermophilus), this protein is Subtilisin J (aprJ).